The primary structure comprises 51 residues: Ribosome biogenesis protein Nop10 (51 aa).

This sequence belongs to the NOP10 family.

In terms of biological role, involved in ribosome biogenesis; more specifically in 18S rRNA pseudouridylation and in cleavage of pre-rRNA. This is Ribosome biogenesis protein Nop10 from Methanococcus maripaludis (strain C7 / ATCC BAA-1331).